A 321-amino-acid chain; its full sequence is Acetyl-coenzyme A carboxylase carboxyl transferase subunit alpha (321 aa).

The CoA carboxyltransferase C-terminal domain occupies 39-293; the sequence is RLQQKSQNLA…RRALGDALRQ (255 aa).

The protein belongs to the AccA family. In terms of assembly, acetyl-CoA carboxylase is a heterohexamer composed of biotin carboxyl carrier protein (AccB), biotin carboxylase (AccC) and two subunits each of ACCase subunit alpha (AccA) and ACCase subunit beta (AccD).

Its subcellular location is the cytoplasm. The catalysed reaction is N(6)-carboxybiotinyl-L-lysyl-[protein] + acetyl-CoA = N(6)-biotinyl-L-lysyl-[protein] + malonyl-CoA. It functions in the pathway lipid metabolism; malonyl-CoA biosynthesis; malonyl-CoA from acetyl-CoA: step 1/1. Component of the acetyl coenzyme A carboxylase (ACC) complex. First, biotin carboxylase catalyzes the carboxylation of biotin on its carrier protein (BCCP) and then the CO(2) group is transferred by the carboxyltransferase to acetyl-CoA to form malonyl-CoA. The polypeptide is Acetyl-coenzyme A carboxylase carboxyl transferase subunit alpha (Bordetella bronchiseptica (strain ATCC BAA-588 / NCTC 13252 / RB50) (Alcaligenes bronchisepticus)).